A 356-amino-acid polypeptide reads, in one-letter code: Phosphatidylglycerol--prolipoprotein diacylglyceryl transferase (356 aa).

A run of 4 helical transmembrane segments spans residues I24–V44, W59–I79, L103–V123, and V144–G164. R165 contributes to the a 1,2-diacyl-sn-glycero-3-phospho-(1'-sn-glycerol) binding site. 2 helical membrane-spanning segments follow: residues P209 to G229 and F265 to C285.

This sequence belongs to the Lgt family.

The protein resides in the cell membrane. It carries out the reaction L-cysteinyl-[prolipoprotein] + a 1,2-diacyl-sn-glycero-3-phospho-(1'-sn-glycerol) = an S-1,2-diacyl-sn-glyceryl-L-cysteinyl-[prolipoprotein] + sn-glycerol 1-phosphate + H(+). Its pathway is protein modification; lipoprotein biosynthesis (diacylglyceryl transfer). Its function is as follows. Catalyzes the transfer of the diacylglyceryl group from phosphatidylglycerol to the sulfhydryl group of the N-terminal cysteine of a prolipoprotein, the first step in the formation of mature lipoproteins. The sequence is that of Phosphatidylglycerol--prolipoprotein diacylglyceryl transferase from Malacoplasma penetrans (strain HF-2) (Mycoplasma penetrans).